A 172-amino-acid chain; its full sequence is Shikimate kinase (172 aa).

8 to 15 serves as a coordination point for ATP; sequence GARASGKT.

It belongs to the shikimate kinase family.

It is found in the cytoplasm. The enzyme catalyses shikimate + ATP = 3-phosphoshikimate + ADP + H(+). It participates in metabolic intermediate biosynthesis; chorismate biosynthesis; chorismate from D-erythrose 4-phosphate and phosphoenolpyruvate: step 5/7. This Oleidesulfovibrio alaskensis (strain ATCC BAA-1058 / DSM 17464 / G20) (Desulfovibrio alaskensis) protein is Shikimate kinase.